Reading from the N-terminus, the 150-residue chain is CASP-like protein 2 (150 aa).

Over 1-17 the chain is Cytoplasmic; sequence MKPEAGDGRSGWRWVAT. A helical membrane pass occupies residues 18 to 38; sequence FDLILRLAAIVATSTAVLAAM. Over 39–41 the chain is Extracellular; that stretch reads GKT. A helical membrane pass occupies residues 42-62; that stretch reads FVVVVNGVACFYLLMSLPVSI. At 63 to 82 the chain is on the cytoplasmic side; sequence FNIMRPGACPANRAVLTALD. The chain crosses the membrane as a helical span at residues 83–103; sequence MVTVALVTAGALVAGILYLVH. Over 104-121 the chain is Extracellular; the sequence is KAGDTHADWFSIWSQLDS. Residues 122-142 form a helical membrane-spanning segment; it reads LSYLAVLALILHVLLSGSILY. The Cytoplasmic segment spans residues 143–150; it reads KQALNIMF.

The protein belongs to the Casparian strip membrane proteins (CASP) family. As to quaternary structure, homodimer and heterodimers.

It is found in the cell membrane. The sequence is that of CASP-like protein 2 from Picea sitchensis (Sitka spruce).